Consider the following 178-residue polypeptide: Peptide deformylase (178 aa).

Residues Cys-92 and His-134 each coordinate Fe cation. Residue Glu-135 is part of the active site. His-138 contributes to the Fe cation binding site.

This sequence belongs to the polypeptide deformylase family. Fe(2+) is required as a cofactor.

The enzyme catalyses N-terminal N-formyl-L-methionyl-[peptide] + H2O = N-terminal L-methionyl-[peptide] + formate. Its function is as follows. Removes the formyl group from the N-terminal Met of newly synthesized proteins. Requires at least a dipeptide for an efficient rate of reaction. N-terminal L-methionine is a prerequisite for activity but the enzyme has broad specificity at other positions. The chain is Peptide deformylase from Alkalilimnicola ehrlichii (strain ATCC BAA-1101 / DSM 17681 / MLHE-1).